The sequence spans 188 residues: Elongation factor P (188 aa).

This sequence belongs to the elongation factor P family.

Its subcellular location is the cytoplasm. The protein operates within protein biosynthesis; polypeptide chain elongation. In terms of biological role, involved in peptide bond synthesis. Stimulates efficient translation and peptide-bond synthesis on native or reconstituted 70S ribosomes in vitro. Probably functions indirectly by altering the affinity of the ribosome for aminoacyl-tRNA, thus increasing their reactivity as acceptors for peptidyl transferase. This is Elongation factor P from Rickettsia peacockii (strain Rustic).